The chain runs to 75 residues: Large ribosomal subunit protein bL31 (75 aa).

The protein belongs to the bacterial ribosomal protein bL31 family. Type A subfamily. As to quaternary structure, part of the 50S ribosomal subunit.

Its function is as follows. Binds the 23S rRNA. The polypeptide is Large ribosomal subunit protein bL31 (Bradyrhizobium diazoefficiens (strain JCM 10833 / BCRC 13528 / IAM 13628 / NBRC 14792 / USDA 110)).